Reading from the N-terminus, the 256-residue chain is Small ribosomal subunit protein eS1 (256 aa).

A compositionally biased stretch (basic residues) spans 1-18 (MAVGKNKRLSKGKKGIKK). The disordered stretch occupies residues 1–20 (MAVGKNKRLSKGKKGIKKRT). A2 is subject to N-acetylalanine; partial.

It belongs to the eukaryotic ribosomal protein eS1 family. In terms of assembly, component of the small ribosomal subunit. Mature ribosomes consist of a small (40S) and a large (60S) subunit. The 40S subunit contains about 33 different proteins and 1 molecule of RNA (18S). The 60S subunit contains about 49 different proteins and 3 molecules of RNA (25S, 5.8S and 5S).

The protein resides in the cytoplasm. In Aspergillus terreus (strain NIH 2624 / FGSC A1156), this protein is Small ribosomal subunit protein eS1 (rps1).